We begin with the raw amino-acid sequence, 834 residues long: MAPHWAVWLLAAGLWGLGIGAEMWWNLVPRKTVSSGELVTVVRRFSQTGIQDFLTLTLTEHSGLLYVGAREALFAFSVEALELQGAISWEAPAEKKIECTQKGKSNQTECFNFIRFLQPYNSSHLYVCGTYAFQPKCTYINMLTFTLDRAEFEDGKGKCPYDPAKGHTGLLVDGELYSATLNNFLGTEPVILRYMGTHHSIKTEYLAFWLNEPHFVGSAFVPESVGSFTGDDDKIYFFFSERAVEYDCYSEQVVARVARVCKGDMGGARTLQKKWTTFLKARLVCSAPDWKVYFNQLKAVHTLRGASWHNTTFFGVFQARWGDMDLSAVCEYQLEQIQQVFEGPYKEYSEQAQKWARYTDPVPSPRPGSCINNWHRDNGYTSSLELPDNTLNFIKKHPLMEDQVKPRLGRPLLVKKNTNFTHVVADRVPGLDGATYTVLFIGTGDGWLLKAVSLGPWIHMVEELQVFDQEPVESLVLSQSKKVLFAGSRSQLVQLSLADCTKYRFCVDCVLARDPYCAWNVNTSRCVATTSGRSGSFLVQHVANLDTSKMCNQYGIKKVRSIPKNITVVSGTDLVLPCHLSSNLAHAHWTFGSQDLPAEQPGSFLYDTGLQALVVMAAQSRHSGPYRCYSEEQGTRLAAESYLVAVVAGSSVTLEARAPLENLGLVWLAVVALGAVCLVLLLLVLSLRRRLREELEKGAKASERTLVYPLELPKEPASPPFRPGPETDEKLWDPVGYYYSDGSLKIVPGHARCQPGGGPPSPPPGIPGQPLPSPTRLHLGGGRNSNANGYVRLQLGGEDRGGSGHPLPELADELRRKLQQRQPLPDSNPEESSV.

Residues 1–20 form the signal peptide; sequence MAPHWAVWLLAAGLWGLGIG. At 21–664 the chain is on the extracellular side; the sequence is AEMWWNLVPR…EARAPLENLG (644 aa). Residues 30-497 enclose the Sema domain; the sequence is RKTVSSGELV…SRSQLVQLSL (468 aa). Residues 46–489 form a dominant negative effect on myogenic differentiation region; that stretch reads SQTGIQDFLT…SKKVLFAGSR (444 aa). A disulfide bridge connects residues Cys-99 and Cys-110. N-linked (GlcNAc...) asparagine glycosylation is found at Asn-106 and Asn-121. 3 disulfide bridges follow: Cys-128/Cys-137, Cys-261/Cys-370, and Cys-285/Cys-330. Residues Asn-310 and Asn-419 are each glycosylated (N-linked (GlcNAc...) asparagine). One can recognise a PSI domain in the interval 499–552; that stretch reads DCTKYRFCVDCVLARDPYCAWNVNTSRCVATTSGRSGSFLVQHVANLDTSKMCN. Disulfide bonds link Cys-500–Cys-517 and Cys-509–Cys-526. 2 N-linked (GlcNAc...) asparagine glycosylation sites follow: Asn-522 and Asn-565. In terms of domain architecture, Ig-like C2-type spans 557-645; the sequence is KKVRSIPKNI…RLAAESYLVA (89 aa). A disulfide bond links Cys-578 and Cys-628. The chain crosses the membrane as a helical span at residues 665–685; that stretch reads LVWLAVVALGAVCLVLLLLVL. The Cytoplasmic segment spans residues 686-834; sequence SLRRRLREEL…PDSNPEESSV (149 aa). The residue at position 743 (Ser-743) is a Phosphoserine. Residues 749-834 form a disordered region; that stretch reads GHARCQPGGG…PDSNPEESSV (86 aa). Positions 757-773 are enriched in pro residues; that stretch reads GGPPSPPPGIPGQPLPS. The PDZ-binding motif lies at 831-834; sequence ESSV.

This sequence belongs to the semaphorin family. As to quaternary structure, interacts (via the PDZ-binding motif) with GIPC (via the PDZ domain). Interacts with NCDN. Interacts (via the PDZ-binding motif) with DLG4. Interacts with PLXNB2. Predominantly expressed in brain (at protein level).

It localises to the postsynaptic density membrane. The protein resides in the cytoplasmic vesicle. The protein localises to the secretory vesicle. Its subcellular location is the synaptic vesicle membrane. Its function is as follows. Cell surface receptor for PLXNB2 that plays an important role in cell-cell signaling. PLXNB2 binding promotes downstream activation of RHOA and phosphorylation of ERBB2 at 'Tyr-1248'. Required for normal brain development, axon guidance and cell migration. Probable signaling receptor which may play a role in myogenic differentiation through activation of the stress-activated MAPK cascade. This is Semaphorin-4C (Sema4c) from Mus musculus (Mouse).